The chain runs to 80 residues: MATPTQSPTNVPEETDPFFYDYATVQTVGMTLATIMFVLGIIIILSKKVKCRKADSRSESPTCKSCKSELPSSAPGGGGV.

Residues 1–22 are Extracellular-facing; that stretch reads MATPTQSPTNVPEETDPFFYDY. Residues Thr-3, Thr-5, and Thr-9 are each glycosylated (O-linked (GlcNAc) threonine). The chain crosses the membrane as a helical span at residues 23 to 45; that stretch reads ATVQTVGMTLATIMFVLGIIIIL. The Cytoplasmic segment spans residues 46-80; it reads SKKVKCRKADSRSESPTCKSCKSELPSSAPGGGGV. The tract at residues 55–80 is disordered; the sequence is DSRSESPTCKSCKSELPSSAPGGGGV. Phosphoserine is present on Ser-73.

It belongs to the FXYD family. In terms of assembly, regulatory subunit of the sodium/potassium-transporting ATPase which is composed of a catalytic alpha subunit, a non-catalytic beta subunit and an additional regulatory subunit. The regulatory subunit, a member of the FXYD protein family, modulates the enzymatic activity in a tissue- and isoform-specific way by changing affinities of the Na+/K+-ATPase toward Na(+), K(+) or ATP. O-glycosylated; required for stabilization and translocation to the plasma membrane.

The protein localises to the cell membrane. Associates with and regulates the activity of the sodium/potassium-transporting ATPase (NKA) which catalyzes the hydrolysis of ATP coupled with the exchange of Na(+) and K(+) ions across the plasma membrane. Reduces the apparent affinity for external K(+), an effect that depends on the presence of external Na(+) and voltage. Increases the apparent affinity for intracellular Na(+). The protein is FXYD domain-containing ion transport regulator 7 (Fxyd7) of Mus musculus (Mouse).